We begin with the raw amino-acid sequence, 60 residues long: Short neurotoxin 1 (60 aa).

4 cysteine pairs are disulfide-bonded: Cys-3–Cys-22, Cys-17–Cys-39, Cys-41–Cys-52, and Cys-53–Cys-58.

Belongs to the three-finger toxin family. Short-chain subfamily. Type I alpha-neurotoxin sub-subfamily. As to expression, expressed by the venom gland.

It is found in the secreted. Functionally, binds to muscle nicotinic acetylcholine receptor (nAChR) and inhibit acetylcholine from binding to the receptor, thereby impairing neuromuscular transmission. The protein is Short neurotoxin 1 of Dendroaspis viridis (Western green mamba).